A 225-amino-acid polypeptide reads, in one-letter code: C-type lectin domain-containing protein 91 (225 aa).

The first 21 residues, 1–21 (MRSTYILIIVPLIIIGGGVVA), serve as a signal peptide directing secretion. The 131-residue stretch at 85-215 (YSDSCYFIET…CTMAFKSICE (131 aa)) folds into the C-type lectin domain. 2 disulfide bridges follow: Cys106-Cys214 and Cys185-Cys206. The N-linked (GlcNAc...) asparagine glycan is linked to Asn217.

It is found in the secreted. In Caenorhabditis elegans, this protein is C-type lectin domain-containing protein 91 (clec-91).